The following is a 210-amino-acid chain: ESCRT-III complex subunit did4 (210 aa).

The interval Met-1 to Lys-38 is disordered. Positions Gln-15 to Arg-97 form a coiled coil. Over residues Gly-26–Lys-38 the composition is skewed to basic and acidic residues.

Belongs to the SNF7 family. As to quaternary structure, core component of the ESCRT-III complex (endosomal sorting required for transport complex III). ESCRT-III appears to be sequentially assembled as a flat lattice on the endosome membrane.

Its subcellular location is the cytoplasm. It localises to the endosome membrane. Its function is as follows. Required for the sorting and concentration of proteins resulting in the entry of these proteins into the invaginating vesicles of the multivesicular body (MVB). Acts a component of the ESCRT-III complex, which appears to be critical for late steps in MVB sorting, such as membrane invagination and final cargo sorting and recruitment of late-acting components of the sorting machinery. The MVB pathway requires the sequential function of ESCRT-O, -I,-II and -III complex assemblies. The polypeptide is ESCRT-III complex subunit did4 (did4) (Schizosaccharomyces pombe (strain 972 / ATCC 24843) (Fission yeast)).